The chain runs to 317 residues: Taste receptor type 2 member 14 (317 aa).

Over 1–7 (MGGVIKS) the chain is Extracellular. Residues 8 to 28 (IFTFVLIVEFIIGNLGNSFIA) traverse the membrane as a helical segment. Topologically, residues 29-55 (LVNCIDWVKGRKISSVDRILTALAISR) are cytoplasmic. Residues 56–76 (ISLVWLIFGSWCVSVFFPALF) traverse the membrane as a helical segment. The Extracellular portion of the chain corresponds to 77–87 (ATEKMFRMLTN). Residues threonine 86 and tryptophan 89 each contribute to the cholesterol site. The chain crosses the membrane as a helical span at residues 88-108 (IWTVINHFSVWLATGLGTFYF). The Cytoplasmic segment spans residues 109–129 (LKIANFSNSIFLYLKWRVKKV). Residues 130–150 (VLVLLLVTSVFLFLNIALINI) traverse the membrane as a helical segment. The Extracellular portion of the chain corresponds to 151-184 (HINASINGYRRNKTCSSDSSNFTRFSSLIVLTST). N-linked (GlcNAc...) asparagine glycans are attached at residues asparagine 153, asparagine 162, and asparagine 171. Valine 180 contacts cholesterol. A helical membrane pass occupies residues 185–205 (VFIFIPFTLSLAMFLLLIFSM). The Cytoplasmic portion of the chain corresponds to 206-232 (WKHRKKMQHTVKISGDASTKAHRGVKS). A helical membrane pass occupies residues 233–253 (VITFFLLYAIFSLSFFISVWT). Residues 254 to 261 (SERLEENL) are Extracellular-facing. A helical transmembrane segment spans residues 262-282 (IILSQVMGMAYPSCHSCVLIL). Residues serine 265 and methionine 268 each contribute to the cholesterol site. The Cytoplasmic segment spans residues 283-317 (GNKKLRQASLSVLLWLRYMFKDGEPSGHKEFRESS).

Belongs to the G-protein coupled receptor T2R family. As to quaternary structure, core component of the TAS2R14-GNAI1 complex, consisting of TAS2R14, GNAI1, GNB1 and GNG2; within the complex interacts with GNAI1. Core component of the TAS2R14-GNAT3 complex, consisting of TAS2R14, GNAT3, GNB1 and GNG2; within the complex interacts with GNAT3. Core component of the TAS2R14-GNAS2 complex, consisting of TAS2R14, GNAS2, GNB1 and GNG2; within the complex interacts with GNAS2. As to expression, highly expressed in cerebellum, pancreas, small intestine and thymus; also expressed in adipose, aorta, skin and tongue, but at significantly lower levels. Expressed in subsets of taste receptor cells of the tongue and palate epithelium and exclusively in gustducin-positive cells. Expressed in testis.

It is found in the membrane. The enzyme catalyses Ca(2+)(in) = Ca(2+)(out). It carries out the reaction 3',5'-cyclic AMP(in) = 3',5'-cyclic AMP(out). Its activity is regulated as follows. Basal activity is enhanced by binding to bitter tastants, such as flufenamic acid and aristolochic acid. Regulated by cholesterol in a concentration-dependent manner. In terms of biological role, gustducin-linked G-protein coupled receptor that plays a role in the perception of bitterness. The activity of this receptor stimulates GNAT3, activating the gustducin G-protein pathway. Likely plays a role in sensing the chemical composition of the gastrointestinal content and other extra-oral tissues via the inhibitory G-protein pathways. The chain is Taste receptor type 2 member 14 (TAS2R14) from Homo sapiens (Human).